The primary structure comprises 320 residues: Ferrochelatase (320 aa).

His-194 and Glu-275 together coordinate Fe cation.

This sequence belongs to the ferrochelatase family. In terms of assembly, monomer.

The protein resides in the cytoplasm. It carries out the reaction heme b + 2 H(+) = protoporphyrin IX + Fe(2+). Its pathway is porphyrin-containing compound metabolism; protoheme biosynthesis; protoheme from protoporphyrin-IX: step 1/1. Catalyzes the ferrous insertion into protoporphyrin IX. The protein is Ferrochelatase of Salmonella arizonae (strain ATCC BAA-731 / CDC346-86 / RSK2980).